Here is a 320-residue protein sequence, read N- to C-terminus: Olfactory receptor 2T12 (320 aa).

Over 1-23 (MEMRNTTPDFILLGLFNHTRAHQ) the chain is Extracellular. A glycan (N-linked (GlcNAc...) asparagine) is linked at asparagine 17. The helical transmembrane segment at 24–47 (VLFMMLLATVLTSLFSNALMILLI) threads the bilayer. At 48 to 55 (HWDHRLHR) the chain is on the cytoplasmic side. The helical transmembrane segment at 56-77 (PMYFLLSQLSLMDMMLVSTTVP) threads the bilayer. Topologically, residues 78–98 (KMAADYLTGNKAISRAGCGVQ) are extracellular. The cysteines at positions 95 and 187 are disulfide-linked. A helical membrane pass occupies residues 99–118 (IFFLPTLGGGECFLLAAMAY). Residues 119-137 (DRYAAVCHPLRYPTLMSWQ) are Cytoplasmic-facing. The helical transmembrane segment at 138-156 (LCLRMTMSSWLLGAADGLL) threads the bilayer. The Extracellular segment spans residues 157 to 193 (QAVATLSFPYCGAHEIDHFFCEAPVLVRLACADTSVF). A helical membrane pass occupies residues 194–217 (ENAMYICCVLMLLVPFSLILSSYG). Residues 218 to 234 (LILAAVLLMRSTEARKK) lie on the Cytoplasmic side of the membrane. The helical transmembrane segment at 235-257 (AFATCSSHVAVVGLFYGAGIFTY) threads the bilayer. The Extracellular portion of the chain corresponds to 258-270 (MRPKSHRSTNHDK). Residues 271 to 290 (VVSAFYTMFTPLLNPLIYSV) form a helical membrane-spanning segment. The Cytoplasmic segment spans residues 291 to 320 (RNSEVKEALKRWLGTCVNLKHQQNEAHRSR).

Belongs to the G-protein coupled receptor 1 family.

The protein localises to the cell membrane. Functionally, odorant receptor. The sequence is that of Olfactory receptor 2T12 (OR2T12) from Homo sapiens (Human).